We begin with the raw amino-acid sequence, 194 residues long: MRYSKLVLASTSAYRRLLLERFQLPFETARPDVDETPLPNEMPPDTANRLAVEKARAVAVRHPDALVIGSDQVAALNGEIFGKPGTVAAAIGQLQRMRGATVIFHTAVAVVNARTGQVRCENVPTRVKFRELSDDEIVRYVDKERPLDCAGSAKSEALGITLLDSLSGDDPTALVGLPLIALSRMLRAEGLLLP.

The active-site Proton acceptor is Asp71.

The protein belongs to the Maf family. YceF subfamily. A divalent metal cation serves as cofactor.

The protein localises to the cytoplasm. The catalysed reaction is N(7)-methyl-GTP + H2O = N(7)-methyl-GMP + diphosphate + H(+). In terms of biological role, nucleoside triphosphate pyrophosphatase that hydrolyzes 7-methyl-GTP (m(7)GTP). May have a dual role in cell division arrest and in preventing the incorporation of modified nucleotides into cellular nucleic acids. The polypeptide is 7-methyl-GTP pyrophosphatase (Aromatoleum aromaticum (strain DSM 19018 / LMG 30748 / EbN1) (Azoarcus sp. (strain EbN1))).